The primary structure comprises 573 residues: 3-(3-hydroxy-phenyl)propionate/3-hydroxycinnamic acid hydroxylase (573 aa).

FAD is bound by residues 18–47 and 283–293; these read DVVIVGAGPVGLTLANILGLQGVRTMIVEE and FRKGRMFLAGD.

It belongs to the PheA/TfdB FAD monooxygenase family. It depends on FAD as a cofactor.

It carries out the reaction 3-(3-hydroxyphenyl)propanoate + NADH + O2 + H(+) = 3-(2,3-dihydroxyphenyl)propanoate + NAD(+) + H2O. The catalysed reaction is (2E)-3-(3-hydroxyphenyl)prop-2-enoate + NADH + O2 + H(+) = (2E)-3-(2,3-dihydroxyphenyl)prop-2-enoate + NAD(+) + H2O. It functions in the pathway aromatic compound metabolism; 3-phenylpropanoate degradation. Functionally, catalyzes the insertion of one atom of molecular oxygen into position 2 of the phenyl ring of 3-(3-hydroxyphenyl)propionate (3-HPP) and hydroxycinnamic acid (3HCI). This chain is 3-(3-hydroxy-phenyl)propionate/3-hydroxycinnamic acid hydroxylase, found in Mycobacterium sp. (strain KMS).